The following is a 245-amino-acid chain: Ubiquinone/menaquinone biosynthesis C-methyltransferase UbiE (245 aa).

S-adenosyl-L-methionine is bound by residues threonine 71, aspartate 92, and 118 to 119 (DA).

It belongs to the class I-like SAM-binding methyltransferase superfamily. MenG/UbiE family.

It catalyses the reaction a 2-demethylmenaquinol + S-adenosyl-L-methionine = a menaquinol + S-adenosyl-L-homocysteine + H(+). The enzyme catalyses a 2-methoxy-6-(all-trans-polyprenyl)benzene-1,4-diol + S-adenosyl-L-methionine = a 5-methoxy-2-methyl-3-(all-trans-polyprenyl)benzene-1,4-diol + S-adenosyl-L-homocysteine + H(+). The protein operates within quinol/quinone metabolism; menaquinone biosynthesis; menaquinol from 1,4-dihydroxy-2-naphthoate: step 2/2. Its pathway is cofactor biosynthesis; ubiquinone biosynthesis. Its function is as follows. Methyltransferase required for the conversion of demethylmenaquinol (DMKH2) to menaquinol (MKH2) and the conversion of 2-polyprenyl-6-methoxy-1,4-benzoquinol (DDMQH2) to 2-polyprenyl-3-methyl-6-methoxy-1,4-benzoquinol (DMQH2). The protein is Ubiquinone/menaquinone biosynthesis C-methyltransferase UbiE of Neisseria gonorrhoeae (strain ATCC 700825 / FA 1090).